Here is a 206-residue protein sequence, read N- to C-terminus: Musculin (206 aa).

The segment at 1 to 115 is disordered; that stretch reads MSTGSVSDPE…QSQRNAANAR (115 aa). Residues 46 to 56 show a composition bias toward acidic residues; that stretch reads SAEEEDPDGEE. The Nuclear localization signal motif lies at 71–76; it reads KRKRPR. Residues 78–92 show a composition bias toward gly residues; sequence AGGGGAGGSAGGGGK. Positions 93–102 are enriched in low complexity; it reads KPLPAKGSAA. Positions 107-159 constitute a bHLH domain; it reads SQRNAANARERARMRVLSKAFSRLKTSLPWVPPDTKLSKLDTLRLASSYIAHL.

In terms of assembly, efficient DNA binding requires dimerization with another bHLH protein. Binds DNA as a homodimer or a heterodimer. Forms a heterodimer with TCF3. As to expression, expressed in lymphoid tissues, B-cell lines and activated B-cells.

The protein localises to the nucleus. Its function is as follows. Transcription repressor capable of inhibiting the transactivation capability of TCF3/E47. May play a role in regulating antigen-dependent B-cell differentiation. The polypeptide is Musculin (MSC) (Homo sapiens (Human)).